A 396-amino-acid chain; its full sequence is Aspartate aminotransferase (396 aa).

L-aspartate contacts are provided by Gly34, Trp130, and Asn183. Lys246 carries the post-translational modification N6-(pyridoxal phosphate)lysine. Arg374 is an L-aspartate binding site.

It belongs to the class-I pyridoxal-phosphate-dependent aminotransferase family. As to quaternary structure, homodimer. Pyridoxal 5'-phosphate is required as a cofactor.

Its subcellular location is the cytoplasm. It carries out the reaction L-aspartate + 2-oxoglutarate = oxaloacetate + L-glutamate. In Salmonella typhi, this protein is Aspartate aminotransferase (aspC).